Consider the following 189-residue polypeptide: Density-regulated protein homolog (189 aa).

The SUI1 domain occupies 105 to 172 (ICVSRAARGK…DLFDVIPEKW (68 aa)).

It belongs to the DENR family. In terms of assembly, interacts with MCTS1.

In terms of biological role, regulates translation as part of a complex with MCTS1. Specifically required for translational re-initiation in mRNAs containing upstream open reading frames (uORFs). Not required for standard translational initiation. Regulates expression of a subset of gene products including mbc, InR and EcR. In Drosophila melanogaster (Fruit fly), this protein is Density-regulated protein homolog.